A 109-amino-acid chain; its full sequence is Defensin-B5 (109 aa).

Positions 1-20 (MRGLLPFLFLLSFFLSPIQA) are cleaved as a signal peptide. The tract at residues 21-44 (QPEGREEELEETWSEDRDQAPPRV) is disordered. Positions 21–70 (QPEGREEELEETWSEDRDQAPPRVVEESEVVGAENEAGLAAGRSYPWIIL) are excised as a propeptide. A compositionally biased stretch (basic and acidic residues) spans 34–44 (SEDRDQAPPRV). Cystine bridges form between cysteine 73–cysteine 101, cysteine 80–cysteine 95, and cysteine 85–cysteine 102. Residues 107–109 (AVP) constitute a propeptide that is removed on maturation.

This sequence belongs to the beta-defensin family. As to expression, highly expressed in kidney, and expressed at lower levels in testis.

Its subcellular location is the secreted. Has antimicrobial activity. The chain is Defensin-B5 from Ornithorhynchus anatinus (Duckbill platypus).